Here is a 447-residue protein sequence, read N- to C-terminus: Argininosuccinate synthase (447 aa).

ATP-binding positions include Ala17–Ser25 and Ala43. Tyr99 contacts L-citrulline. 2 residues coordinate ATP: Gly129 and Thr131. L-aspartate contacts are provided by Thr131, Asn135, and Asp136. Asn135 is a binding site for L-citrulline. Asp136 contacts ATP. Residues Arg139 and Ser192 each contribute to the L-citrulline site. Asp194 contacts ATP. Positions 201, 203, and 280 each coordinate L-citrulline.

It belongs to the argininosuccinate synthase family. Type 2 subfamily. As to quaternary structure, homotetramer.

The protein localises to the cytoplasm. The catalysed reaction is L-citrulline + L-aspartate + ATP = 2-(N(omega)-L-arginino)succinate + AMP + diphosphate + H(+). It functions in the pathway amino-acid biosynthesis; L-arginine biosynthesis; L-arginine from L-ornithine and carbamoyl phosphate: step 2/3. The protein is Argininosuccinate synthase of Salmonella agona (strain SL483).